Consider the following 427-residue polypeptide: Putative ABC transporter substrate-binding protein YesO (427 aa).

The protein belongs to the bacterial solute-binding protein 1 family.

Functionally, may play a role in the degradation of type I rhamnogalacturonan derived from plant cell walls. In Bacillus subtilis (strain 168), this protein is Putative ABC transporter substrate-binding protein YesO (yesO).